Here is a 311-residue protein sequence, read N- to C-terminus: Ornithine carbamoyltransferase (311 aa).

Carbamoyl phosphate-binding positions include 54–57 (STRT), Gln-81, Arg-105, and 132–135 (HPCQ). L-ornithine contacts are provided by residues Asn-164, Asp-228, and 232 to 233 (SM). Residues 268–269 (CL) and Arg-296 contribute to the carbamoyl phosphate site.

The protein belongs to the aspartate/ornithine carbamoyltransferase superfamily. OTCase family.

It is found in the cytoplasm. It carries out the reaction carbamoyl phosphate + L-ornithine = L-citrulline + phosphate + H(+). It participates in amino-acid biosynthesis; L-arginine biosynthesis; L-arginine from L-ornithine and carbamoyl phosphate: step 1/3. Its function is as follows. Reversibly catalyzes the transfer of the carbamoyl group from carbamoyl phosphate (CP) to the N(epsilon) atom of ornithine (ORN) to produce L-citrulline. The sequence is that of Ornithine carbamoyltransferase from Renibacterium salmoninarum (strain ATCC 33209 / DSM 20767 / JCM 11484 / NBRC 15589 / NCIMB 2235).